We begin with the raw amino-acid sequence, 24 residues long: N-acyl-L-amino acid amidohydrolase (24 aa).

This sequence belongs to the peptidase M20 family. Homotetramer. Co(2+) is required as a cofactor.

It catalyses the reaction an N-acyl-L-amino acid + H2O = an L-alpha-amino acid + a carboxylate. The catalysed reaction is an N-acetyl-L-cysteine-S-conjugate + H2O = an S-substituted L-cysteine + acetate. The chain is N-acyl-L-amino acid amidohydrolase from Parageobacillus thermoglucosidasius (Geobacillus thermoglucosidasius).